A 201-amino-acid polypeptide reads, in one-letter code: Holliday junction branch migration complex subunit RuvA (201 aa).

The segment at 1-64 is domain I; it reads MIGRLRGELV…EDAHVLYGFA (64 aa). Residues 65–143 are domain II; the sequence is SESERALFRS…SLPAAVTLTG (79 aa). The flexible linker stretch occupies residues 144–153; it reads GKPAAAAARA. Residues 153–201 are domain III; the sequence is APDPVSDAVSALVSLGYKPQEASRLISAVEGEAERSEDLIRLALKATLK.

It belongs to the RuvA family. As to quaternary structure, homotetramer. Forms an RuvA(8)-RuvB(12)-Holliday junction (HJ) complex. HJ DNA is sandwiched between 2 RuvA tetramers; dsDNA enters through RuvA and exits via RuvB. An RuvB hexamer assembles on each DNA strand where it exits the tetramer. Each RuvB hexamer is contacted by two RuvA subunits (via domain III) on 2 adjacent RuvB subunits; this complex drives branch migration. In the full resolvosome a probable DNA-RuvA(4)-RuvB(12)-RuvC(2) complex forms which resolves the HJ.

The protein resides in the cytoplasm. In terms of biological role, the RuvA-RuvB-RuvC complex processes Holliday junction (HJ) DNA during genetic recombination and DNA repair, while the RuvA-RuvB complex plays an important role in the rescue of blocked DNA replication forks via replication fork reversal (RFR). RuvA specifically binds to HJ cruciform DNA, conferring on it an open structure. The RuvB hexamer acts as an ATP-dependent pump, pulling dsDNA into and through the RuvAB complex. HJ branch migration allows RuvC to scan DNA until it finds its consensus sequence, where it cleaves and resolves the cruciform DNA. The polypeptide is Holliday junction branch migration complex subunit RuvA (Thioalkalivibrio sulfidiphilus (strain HL-EbGR7)).